The chain runs to 283 residues: Secretory carrier-associated membrane protein 2 (283 aa).

A disordered region spans residues 1 to 47 (MARHDPNPFADEEINPFANHTSVPPASNSYLKPLPPEPYDRGATVDI). Residues 1–123 (MARHDPNPFA…LQKIQYVAFT (123 aa)) are Cytoplasmic-facing. Polar residues predominate over residues 18–30 (ANHTSVPPASNSY). The stretch at 50–87 (DSGNDLRAKEMELQAKENELKRKEQELKRREDAIARTG) forms a coiled coil. The next 4 membrane-spanning stretches (helical) occupy residues 124–144 (TLLGLVGCLLWNIVAVTVAWI), 151–171 (IWLLSIIYFLAGVPGAYVLWY), 186–206 (FGAFFFFYVFHIAFCGFAAVA), and 234–254 (IMYFIGAGFFCIETLLNIWVI). At 255–283 (QQVYAYFRGSGKAAEMKREATKSTLMRAL) the chain is on the cytoplasmic side.

This sequence belongs to the SCAMP family.

It is found in the cell membrane. Its subcellular location is the cytoplasmic vesicle. The protein localises to the secretory vesicle membrane. Probably involved in membrane trafficking. The sequence is that of Secretory carrier-associated membrane protein 2 (SCAMP2) from Arabidopsis thaliana (Mouse-ear cress).